The chain runs to 70 residues: Small ribosomal subunit protein bS21 (70 aa).

This sequence belongs to the bacterial ribosomal protein bS21 family.

This chain is Small ribosomal subunit protein bS21, found in Nitrosomonas eutropha (strain DSM 101675 / C91 / Nm57).